We begin with the raw amino-acid sequence, 343 residues long: Probable dual-specificity RNA methyltransferase RlmN (343 aa).

Glu-90 acts as the Proton acceptor in catalysis. Positions 96–325 constitute a Radical SAM core domain; that stretch reads HEGYATACIS…AEIRYEKGAD (230 aa). The cysteines at positions 103 and 330 are disulfide-linked. Positions 110, 114, and 117 each coordinate [4Fe-4S] cluster. Residues 157-158, Ser-189, 212-214, and Asn-288 each bind S-adenosyl-L-methionine; these read GE and SLH. Cys-330 functions as the S-methylcysteine intermediate in the catalytic mechanism.

It belongs to the radical SAM superfamily. RlmN family. Requires [4Fe-4S] cluster as cofactor.

Its subcellular location is the cytoplasm. The catalysed reaction is adenosine(2503) in 23S rRNA + 2 reduced [2Fe-2S]-[ferredoxin] + 2 S-adenosyl-L-methionine = 2-methyladenosine(2503) in 23S rRNA + 5'-deoxyadenosine + L-methionine + 2 oxidized [2Fe-2S]-[ferredoxin] + S-adenosyl-L-homocysteine. It carries out the reaction adenosine(37) in tRNA + 2 reduced [2Fe-2S]-[ferredoxin] + 2 S-adenosyl-L-methionine = 2-methyladenosine(37) in tRNA + 5'-deoxyadenosine + L-methionine + 2 oxidized [2Fe-2S]-[ferredoxin] + S-adenosyl-L-homocysteine. Its function is as follows. Specifically methylates position 2 of adenine 2503 in 23S rRNA and position 2 of adenine 37 in tRNAs. The protein is Probable dual-specificity RNA methyltransferase RlmN of Pseudothermotoga lettingae (strain ATCC BAA-301 / DSM 14385 / NBRC 107922 / TMO) (Thermotoga lettingae).